We begin with the raw amino-acid sequence, 328 residues long: MAALPVLVLVLLLACGGPRAAGQKRKEMVLSEKVSQLMEWTSKRSVIRMNGDKFRRLVKAPPRNYSVIVMFTALQPHRQCVVCKQADEEYQVLANSWRYSSAFTNKIFFAMVDFDEGSDVFQMLNMNSAPTFINFPAKGKPKRGDTYELQVRGFAAEQLARWVADRTDVNIRVIRPPNYAGPLMLGLLLAVIGGLVYLRGSNLDFLYNKTGWAFAALCFVLAMTSGQMWNHIRGPPYAHKNPHTGQVNYIHGSSQAQFVAETHIVLLFNGGVTLGMVLLHEAATSDMDVGKRKIMCIAGIGLVVFFFSWLLSVFRSKYHGYPYSFLMS.

A signal peptide spans 1-22 (MAALPVLVLVLLLACGGPRAAG). The Extracellular portion of the chain corresponds to 23–177 (QKRKEMVLSE…DVNIRVIRPP (155 aa)). Positions 40–168 (WTSKRSVIRM…LARWVADRTD (129 aa)) constitute a Thioredoxin domain. Asparagine 64 carries an N-linked (GlcNAc...) asparagine glycan. An intrachain disulfide couples cysteine 80 to cysteine 83. The chain crosses the membrane as a helical span at residues 178-198 (NYAGPLMLGLLLAVIGGLVYL). Over 199-211 (RGSNLDFLYNKTG) the chain is Cytoplasmic. A helical transmembrane segment spans residues 212 to 232 (WAFAALCFVLAMTSGQMWNHI). Residues 233–257 (RGPPYAHKNPHTGQVNYIHGSSQAQ) lie on the Extracellular side of the membrane. A helical transmembrane segment spans residues 258 to 278 (FVAETHIVLLFNGGVTLGMVL). Topologically, residues 279–293 (LHEAATSDMDVGKRK) are cytoplasmic. A helical membrane pass occupies residues 294 to 314 (IMCIAGIGLVVFFFSWLLSVF). Over 315-328 (RSKYHGYPYSFLMS) the chain is Extracellular.

This sequence belongs to the OST3/OST6 family. Accessory component of the STT3B-containing form of the oligosaccharyltransferase (OST) complex. OST exists in two different complex forms which contain common core subunits RPN1, RPN2, OST48, OST4, DAD1 and TMEM258, either STT3A or STT3B as catalytic subunits, and form-specific accessory subunits. OST can form stable complexes with the Sec61 complex or with both the Sec61 and TRAP complexes.

The protein localises to the cell membrane. It localises to the endoplasmic reticulum. The protein resides in the endoplasmic reticulum membrane. Its pathway is protein modification; protein glycosylation. Its function is as follows. Accessory component of the STT3B-containing form of the N-oligosaccharyl transferase (OST) complex which catalyzes the transfer of a high mannose oligosaccharide from a lipid-linked oligosaccharide donor to an asparagine residue within an Asn-X-Ser/Thr consensus motif in nascent polypeptide chains. Involved in N-glycosylation of STT3B-dependent substrates. Specifically required for the glycosylation of a subset of acceptor sites that are near cysteine residues; in this function seems to act redundantly with TUSC3. In its oxidized form proposed to form transient mixed disulfides with a glycoprotein substrate to facilitate access of STT3B to the unmodified acceptor site. Also has oxidoreductase-independent functions in the STT3B-containing OST complex possibly involving substrate recognition. Could indirectly play a role in Mg(2+) transport in epithelial cells. The protein is Dolichyl-diphosphooligosaccharide--protein glycosyltransferase subunit MAGT1 of Gallus gallus (Chicken).